Reading from the N-terminus, the 879-residue chain is Leucine--tRNA ligase (879 aa).

Residues 45 to 55 (PYPSGALHMGH) carry the 'HIGH' region motif. Residues 637 to 641 (KMSKS) carry the 'KMSKS' region motif. Residue Lys640 coordinates ATP.

Belongs to the class-I aminoacyl-tRNA synthetase family.

The protein resides in the cytoplasm. The enzyme catalyses tRNA(Leu) + L-leucine + ATP = L-leucyl-tRNA(Leu) + AMP + diphosphate. The sequence is that of Leucine--tRNA ligase from Xylella fastidiosa (strain M12).